A 724-amino-acid chain; its full sequence is WD repeat-containing protein 91 (724 aa).

A coiled-coil region spans residues 178–207 (FDSEVQRITSLQEDNEQLRQTVFALQGESR). The disordered stretch occupies residues 249 to 365 (SRNFFSTFLP…PDQTDSANQT (117 aa)). Composition is skewed to polar residues over residues 270–279 (GPQSSPTQSA) and 303–315 (SVSS…STSH). Position 274 is a phosphoserine (Ser274). A compositionally biased stretch (basic and acidic residues) spans 322–333 (QDHEKERKELFS). Over residues 349-365 (DTQTEAPPDQTDSANQT) the composition is skewed to polar residues. 7 WD repeats span residues 389–428 (EHHS…QTKA), 431–471 (MSKS…CLYE), 499–532 (AHSG…QQLQ), 537–576 (PGPV…SALS), 579–618 (AHDG…VKQS), 641–679 (VQVP…AGLE), and 686–724 (GHKA…AQKP).

The protein belongs to the WD repeat WDR91 family.

The protein localises to the early endosome membrane. Its subcellular location is the late endosome membrane. Functions as a negative regulator of the PI3 kinase/PI3K activity associated with endosomal membranes. By modifying the phosphatidylinositol 3-phosphate/PtdInsP3 content of endosomal membranes may regulate endosome fusion, recycling, sorting and early to late endosome transport. The chain is WD repeat-containing protein 91 (wdr91) from Danio rerio (Zebrafish).